A 997-amino-acid chain; its full sequence is Protein HIR2 (997 aa).

WD repeat units follow at residues 10-48 (GISG…DTAF), 117-152 (VSQS…TRSA), 153-194 (NKKE…VVYH), 274-319 (VHSP…PLFA), and 323-362 (ISDS…LGKT). The segment at 408–584 (ADNSSNILST…RKPKEDALGN (177 aa)) is disordered. A compositionally biased stretch (polar residues) spans 409–446 (DNSSNILSTDTNTNEKNLSTVNTTEPQTNSQSSSYNNK). The segment covering 464–480 (SDEKAKNLEARPIEAKS) has biased composition (basic and acidic residues). Over residues 491-501 (SKSSSVTTSDN) the composition is skewed to polar residues. The segment covering 518–538 (TEKKTKPDKKSIKSENGESKV) has biased composition (basic and acidic residues). A compositionally biased stretch (polar residues) spans 539 to 567 (NKAQNTISPKESNTTDNKSTTPDFKNPSY). WD repeat units follow at residues 665–706 (LFQD…IIPP) and 708–745 (TIGV…LEFP).

Belongs to the WD repeat HIR1 family.

The protein resides in the nucleus. Functionally, required for replication-independent chromatin assembly and for the periodic repression of histone gene transcription during the cell cycle. The polypeptide is Protein HIR2 (HIR2) (Candida glabrata (strain ATCC 2001 / BCRC 20586 / JCM 3761 / NBRC 0622 / NRRL Y-65 / CBS 138) (Yeast)).